Here is a 236-residue protein sequence, read N- to C-terminus: Large ribosomal subunit protein uL3 (236 aa).

A disordered region spans residues 139-163 (ARDSSTTHEHHRHVGAIGQRKTPGK).

This sequence belongs to the universal ribosomal protein uL3 family. As to quaternary structure, part of the 50S ribosomal subunit. Forms a cluster with proteins L14 and L19.

One of the primary rRNA binding proteins, it binds directly near the 3'-end of the 23S rRNA, where it nucleates assembly of the 50S subunit. The sequence is that of Large ribosomal subunit protein uL3 from Anaeromyxobacter sp. (strain Fw109-5).